A 255-amino-acid polypeptide reads, in one-letter code: 1-(5-phosphoribosyl)-5-[(5-phosphoribosylamino)methylideneamino] imidazole-4-carboxamide isomerase (255 aa).

The active-site Proton acceptor is D8. Residue D129 is the Proton donor of the active site.

This sequence belongs to the HisA/HisF family.

It is found in the cytoplasm. It carries out the reaction 1-(5-phospho-beta-D-ribosyl)-5-[(5-phospho-beta-D-ribosylamino)methylideneamino]imidazole-4-carboxamide = 5-[(5-phospho-1-deoxy-D-ribulos-1-ylimino)methylamino]-1-(5-phospho-beta-D-ribosyl)imidazole-4-carboxamide. Its pathway is amino-acid biosynthesis; L-histidine biosynthesis; L-histidine from 5-phospho-alpha-D-ribose 1-diphosphate: step 4/9. In Prochlorococcus marinus (strain AS9601), this protein is 1-(5-phosphoribosyl)-5-[(5-phosphoribosylamino)methylideneamino] imidazole-4-carboxamide isomerase.